The following is a 205-amino-acid chain: Large ribosomal subunit protein uL3 (205 aa).

Belongs to the universal ribosomal protein uL3 family. As to quaternary structure, part of the 50S ribosomal subunit. Forms a cluster with proteins L14 and L19.

In terms of biological role, one of the primary rRNA binding proteins, it binds directly near the 3'-end of the 23S rRNA, where it nucleates assembly of the 50S subunit. The sequence is that of Large ribosomal subunit protein uL3 from Parabacteroides distasonis (strain ATCC 8503 / DSM 20701 / CIP 104284 / JCM 5825 / NCTC 11152).